We begin with the raw amino-acid sequence, 377 residues long: MSKRDYYEVLGVSRDTSEREIKKAYKRLAMKFHPDRNPGDKTAEANFKEIKEAYEILTDADKKAAYDQFGHAGVDPNRGGGGYGGGQGDFGDIFGDVFGDIFGGGRRGGQRQAARGSDLRYNLELSLEEAVKGLTKELRIPTLATCDLCEGSGAKKGTSATTCGTCHGQGQVQMRQGFFAVQQPCPTCHGRGKIIKDPCTKCHGDGRVEKSKTLSVKIPAGVDTGDRIRLAGEGEAGEFGAPAGDLYVQVSVREHAIFVRDGNNLYCEVPISFSKAALGGEIEVPTLDGKVSLKIPAETQTGRMFRLRGKGVKSVRSHAVGDLLCKVVMETPVNLNDRQKELLREFEATLTGESKKHSPKAEGFFDGVKKFFQDLNS.

The region spanning 5–70 (DYYEVLGVSR…DKKAAYDQFG (66 aa)) is the J domain. A CR-type zinc finger spans residues 133–211 (GLTKELRIPT…CHGDGRVEKS (79 aa)). Zn(2+) contacts are provided by cysteine 146, cysteine 149, cysteine 163, cysteine 166, cysteine 185, cysteine 188, cysteine 199, and cysteine 202. 4 CXXCXGXG motif repeats span residues 146-153 (CDLCEGSG), 163-170 (CGTCHGQG), 185-192 (CPTCHGRG), and 199-206 (CTKCHGDG).

The protein belongs to the DnaJ family. As to quaternary structure, homodimer. The cofactor is Zn(2+).

Its subcellular location is the cytoplasm. Its function is as follows. Participates actively in the response to hyperosmotic and heat shock by preventing the aggregation of stress-denatured proteins and by disaggregating proteins, also in an autonomous, DnaK-independent fashion. Unfolded proteins bind initially to DnaJ; upon interaction with the DnaJ-bound protein, DnaK hydrolyzes its bound ATP, resulting in the formation of a stable complex. GrpE releases ADP from DnaK; ATP binding to DnaK triggers the release of the substrate protein, thus completing the reaction cycle. Several rounds of ATP-dependent interactions between DnaJ, DnaK and GrpE are required for fully efficient folding. Also involved, together with DnaK and GrpE, in the DNA replication of plasmids through activation of initiation proteins. This Shewanella baltica (strain OS223) protein is Chaperone protein DnaJ.